A 344-amino-acid chain; its full sequence is Holliday junction branch migration complex subunit RuvB (344 aa).

A large ATPase domain (RuvB-L) region spans residues Met1–Tyr185. ATP is bound by residues Leu24, Arg25, Gly66, Lys69, Thr70, Thr71, Glu132–Tyr134, Arg175, Tyr185, and Arg222. Residue Thr70 coordinates Mg(2+). The interval Thr186 to Asp256 is small ATPAse domain (RuvB-S). The head domain (RuvB-H) stretch occupies residues Glu259–Glu344. Residues Arg314 and Arg319 each coordinate DNA.

Belongs to the RuvB family. In terms of assembly, homohexamer. Forms an RuvA(8)-RuvB(12)-Holliday junction (HJ) complex. HJ DNA is sandwiched between 2 RuvA tetramers; dsDNA enters through RuvA and exits via RuvB. An RuvB hexamer assembles on each DNA strand where it exits the tetramer. Each RuvB hexamer is contacted by two RuvA subunits (via domain III) on 2 adjacent RuvB subunits; this complex drives branch migration. In the full resolvosome a probable DNA-RuvA(4)-RuvB(12)-RuvC(2) complex forms which resolves the HJ.

It is found in the cytoplasm. It catalyses the reaction ATP + H2O = ADP + phosphate + H(+). In terms of biological role, the RuvA-RuvB-RuvC complex processes Holliday junction (HJ) DNA during genetic recombination and DNA repair, while the RuvA-RuvB complex plays an important role in the rescue of blocked DNA replication forks via replication fork reversal (RFR). RuvA specifically binds to HJ cruciform DNA, conferring on it an open structure. The RuvB hexamer acts as an ATP-dependent pump, pulling dsDNA into and through the RuvAB complex. RuvB forms 2 homohexamers on either side of HJ DNA bound by 1 or 2 RuvA tetramers; 4 subunits per hexamer contact DNA at a time. Coordinated motions by a converter formed by DNA-disengaged RuvB subunits stimulates ATP hydrolysis and nucleotide exchange. Immobilization of the converter enables RuvB to convert the ATP-contained energy into a lever motion, pulling 2 nucleotides of DNA out of the RuvA tetramer per ATP hydrolyzed, thus driving DNA branch migration. The RuvB motors rotate together with the DNA substrate, which together with the progressing nucleotide cycle form the mechanistic basis for DNA recombination by continuous HJ branch migration. Branch migration allows RuvC to scan DNA until it finds its consensus sequence, where it cleaves and resolves cruciform DNA. The sequence is that of Holliday junction branch migration complex subunit RuvB from Salinibacter ruber (strain DSM 13855 / M31).